The chain runs to 403 residues: Cytochrome P450 monooxygenase ustC (403 aa).

Residues 1–18 (MSPFIFAVTLTFAILALG) form the signal peptide. N-linked (GlcNAc...) asparagine glycans are attached at residues Asn52 and Asn92. Residue Cys318 coordinates heme.

This sequence belongs to the cytochrome P450 family. Heme is required as a cofactor.

The protein operates within mycotoxin biosynthesis. Cytochrome P450 monooxygenase; part of the gene cluster that mediates the biosynthesis of the secondary metabolite ustiloxin B, an antimitotic tetrapeptide. First, ustA is processed by the subtilisin-like endoprotease Kex2 that is outside the ustiloxin B gene cluster, at the C-terminal side of Arg-Lys, after transfer to Golgi apparatus through the endoplasmic reticulum (ER). Cleavage by KEX2 generates 16 peptides YAIG-I to YAIG-XVI. To process the precursor peptide further, at least two peptidases are necessary to cleave the N-terminal and C-terminal sides of the Tyr-Ala-Ile-Gly core peptide which serves as backbone for the synthesis of ustiloxin B, through cyclization and modification of the tyrosine with a non-protein coding amino acid, norvaline. One of the two peptidases must be the serine peptidase ustP; and the other pepdidase is probably ustH. Macrocyclization of the core peptide derived from ustA requires the tyrosinase ustQ, as well as the homologous oxidases ustYa and ustYb, and leads to the production of the first cyclization product N-desmethylustiloxin F. For the formation of N-desmethylustiloxin F, three oxidation steps are required, hydroxylation at the benzylic position, hydroxylation at either the aromatic ring of Tyr or beta-position of Ile, and oxidative cyclization. UstQ may catalyze the oxidation of a phenol moiety, whereas the ustYa and ustYb are most likely responsible for the remaining two-step oxidations. N-desmethylustiloxin F is then methylated by ustM to yield ustiloxin F which in turn substrate of the cytochrome P450 monooxygenase ustC which catalyzes the formation of S-deoxyustiloxin H. The flavoprotein monooxygenases ustF1 and ustF2 then participate in the modification of the side chain of S-deoxyustiloxin H, leading to the synthesis of an oxime intermediate, via ustiloxin H. Finally, carboxylative dehydration performed by the cysteine desulfurase-like protein ustD yields ustiloxin B. In Aspergillus flavus (strain ATCC 200026 / FGSC A1120 / IAM 13836 / NRRL 3357 / JCM 12722 / SRRC 167), this protein is Cytochrome P450 monooxygenase ustC.